Consider the following 49-residue polypeptide: Large ribosomal subunit protein bL33 (49 aa).

This sequence belongs to the bacterial ribosomal protein bL33 family.

This is Large ribosomal subunit protein bL33 from Desulforudis audaxviator (strain MP104C).